The following is a 116-amino-acid chain: Large ribosomal subunit protein uL18 (116 aa).

It belongs to the universal ribosomal protein uL18 family. In terms of assembly, part of the 50S ribosomal subunit; part of the 5S rRNA/L5/L18/L25 subcomplex. Contacts the 5S and 23S rRNAs.

Its function is as follows. This is one of the proteins that bind and probably mediate the attachment of the 5S RNA into the large ribosomal subunit, where it forms part of the central protuberance. In Chromohalobacter salexigens (strain ATCC BAA-138 / DSM 3043 / CIP 106854 / NCIMB 13768 / 1H11), this protein is Large ribosomal subunit protein uL18.